The chain runs to 604 residues: Asparagine synthetase [glutamine-hydrolyzing] 1 (604 aa).

Residue Cys2 is the Nucleophile of the active site. The Glutamine amidotransferase type-2 domain maps to 2-186; that stretch reads CGILAVLGAA…PGHLYSSAAG (185 aa). L-glutamine contacts are provided by residues 50-54, 75-77, and Asp99; these read RLAIV and NGE. The region spanning 211 to 451 is the Asparagine synthetase domain; that stretch reads LREAFEKAVI…LPKHILYRQK (241 aa). ATP is bound by residues Leu232, Val268, and 342–343; that span reads SG.

It carries out the reaction L-aspartate + L-glutamine + ATP + H2O = L-asparagine + L-glutamate + AMP + diphosphate + H(+). It functions in the pathway amino-acid biosynthesis; L-asparagine biosynthesis. In terms of biological role, essential for nitrogen assimilation, distribution and remobilization within the plant via the phloem. The protein is Asparagine synthetase [glutamine-hydrolyzing] 1 of Oryza sativa subsp. japonica (Rice).